Reading from the N-terminus, the 418-residue chain is 1-deoxy-D-xylulose 5-phosphate reductoisomerase (418 aa).

NADPH contacts are provided by T32, G33, S34, I35, and N150. 1-deoxy-D-xylulose 5-phosphate is bound at residue K151. E152 contributes to the NADPH binding site. D174 is a binding site for Mn(2+). Positions 175, 176, 200, and 223 each coordinate 1-deoxy-D-xylulose 5-phosphate. E176 lines the Mn(2+) pocket. An NADPH-binding site is contributed by G229. Residues S236, N241, K242, and E245 each coordinate 1-deoxy-D-xylulose 5-phosphate. E245 serves as a coordination point for Mn(2+).

The protein belongs to the DXR family. It depends on Mg(2+) as a cofactor. Mn(2+) serves as cofactor.

The catalysed reaction is 2-C-methyl-D-erythritol 4-phosphate + NADP(+) = 1-deoxy-D-xylulose 5-phosphate + NADPH + H(+). It participates in isoprenoid biosynthesis; isopentenyl diphosphate biosynthesis via DXP pathway; isopentenyl diphosphate from 1-deoxy-D-xylulose 5-phosphate: step 1/6. Its function is as follows. Catalyzes the NADPH-dependent rearrangement and reduction of 1-deoxy-D-xylulose-5-phosphate (DXP) to 2-C-methyl-D-erythritol 4-phosphate (MEP). The chain is 1-deoxy-D-xylulose 5-phosphate reductoisomerase from Streptomyces coelicolor (strain ATCC BAA-471 / A3(2) / M145).